Here is a 453-residue protein sequence, read N- to C-terminus: Plasmepsin II (453 aa).

Over 1-37 (MDITVREHDFKHGFIKSNSTFDGLNIDNSKNKKKIQK) the chain is Cytoplasmic. A propeptide spanning residues 1 to 124 (MDITVREHDF…SGLTKTNYLG (124 aa)) is cleaved from the precursor. Residues 38–58 (GFQILYVLLFCSVMCGLFYYV) traverse the membrane as a helical; Signal-anchor for type II membrane protein segment. Residues 59–453 (YENVWLQRDN…VGIALAKKNL (395 aa)) lie on the Lumenal side of the membrane. A Peptidase A1 domain is found at 140-447 (FYGDAEVGDN…DYDNQSVGIA (308 aa)). Residue D158 is part of the active site. The cysteines at positions 171 and 176 are disulfide-linked. The active site involves D338. A disulfide bond links C373 and C409.

The protein belongs to the peptidase A1 family. As to quaternary structure, component of the hemozoin formation complex (HFC) composed of falcipains FP2A and/or FP2B, plasmepsins PMII, PMIII/HAP and PMIV, heme detoxifying protein HDP and falcilysin FLN. The HFC complex is involved in hemoglobin degradation and detoxification of heme in the food vacuole during the asexual blood stage. In terms of processing, not N-glycosylated. Post-translationally, proteolytically cleaved into the soluble active mature form in the digestive vacuole by cysteine protease falcipains; the process begins at the early ring stage. Proteolysis requires an acidic environment. In absence of falcipains, autoprocessing may serve as an alternate activation system.

The protein localises to the membrane. It is found in the vacuole lumen. Its subcellular location is the vacuole membrane. It carries out the reaction Hydrolysis of the bonds linking certain hydrophobic residues in hemoglobin or globin. Also cleaves small molecules substrates such as Ala-Leu-Glu-Arg-Thr-Phe-|-Phe(NO2)-Ser-Phe-Pro-Thr.. With respect to regulation, inhibited by pepstatin A. Inhibited by KNI derived compounds (KNI-10742, 10743, 10395, 10333, and 10343). In terms of biological role, during the asexual blood stage, participates in initial cleavage of native host hemoglobin (Hb) resulting in Hb denaturation. May cleave preferentially denatured hemoglobin that has been cleaved by PMI. Digestion of host Hb is an essential step which provides the parasite with amino acids for protein synthesis, and regulates osmolarity. This is Plasmepsin II from Plasmodium falciparum (isolate 3D7).